The chain runs to 1184 residues: MGRIKEKESKAPSLSESHTDYEYAATAATSSDDGFDEPNRVPVHKRKVQLTNGEAKKKKFKHADSNVKPPTLEEIKEIRDTRNLFHSNLFKLQVKEMLEEIQLKPKYSNYIETWIETFTITVQELKDGLLDTCELEVPLHLHKKSFNFQFLTPTSEPKLIGAAATGTLLGPKIVVDVALEMPAACFQHDDYRNLIYDQKRALYLATVASKIKQSPAFKADQFAYNYHANNPLKPVLELTPASKLGKYLLLRVYITAQSEIFKLSRFLPWTNNIRPSVFGDKWNEAETLPATQHYNANVLFDLTLAENQKLLLSTFTGRRNFQEGLLLLKVWLRQRQLDVGFSGFSAHILAAYIAYLKQQRLLHQSSSSYQIARTVWNQLANSDWTQGITLSQHQPHQLITLAGYYDVCFMDVTGYYNLCANLPLAVYKAVCAEAKLAVELLNDVKVNSFSHIFMQTSPLYTRMDNILKITNPASVDQLLQLHVQPHVKYDYANYAHPQLLKLLTDLLQKGLGQRVHAILPLEVPCSPWTVDTKAPVIGRSLTLGLILDPEHAHEVLDKGPATNEDANGAAEFRKFWGNKSNLRRFQDGSITEAVVWATATDAPSQKRLIVRQIVLYLLEHQLQLEPSEVQYIAGNLDVVYSLTPSFKVAKLQTKLKIQQETDAEALTPNVIHCYDALARQLHSLGDLPLDIVSISGISPVFRYCEPQPLLPQARLVSDRIHAGQVLRVIIQLGPSGKWPSDLGALRSLKTAFLIQIGQQLKEQHHLHWHLCKDGLLVLKQGYCFLLELAHSKELALLKQQQTERGVTTYVDNPASRELERRHYILPRVSGALHALHQMHGAFGPTVLIAKRWLAAQLLDDGLWPSIATELLVAHLFQQRQTPHTTVSPQTGFIRFLQLLAHSDWSGELFLLNFNNSWTEQQITDLEHSYRSERDSYPSLCLATAYDQQHAGRLWTSNNSPSKPVLGRVTLLARHALQLIESSLLSPKLAFVRPAQLFMASGDGYDLVIQLKPDLLSNTLCYDLGSPFLPFSQRNFRLPLAGCDQLAKVVQQLRDAYSEYAAFFYNPHGGKELAIVWRPASEFAPKPFKVNELQACTPCVGGKVQVDRDTLVEDFKLLLKDFYLRVCTPQELKREQREHNKPKRYFNGQGESEPDKPQKKKKKASTIPTNAKKRLMKSKSMNALC.

Over residues 1-10 (MGRIKEKESK) the composition is skewed to basic and acidic residues. Disordered regions lie at residues 1–42 (MGRI…NRVP) and 1133–1184 (REQR…NALC).

It belongs to the NRAP family. In terms of assembly, part of the small subunit (SSU) processome, composed of more than 70 proteins and the RNA chaperone small nucleolar RNA (snoRNA) U3.

It localises to the nucleus. Its subcellular location is the nucleolus. It is found in the chromosome. Functionally, part of the small subunit (SSU) processome, first precursor of the small eukaryotic ribosomal subunit. During the assembly of the SSU processome in the nucleolus, many ribosome biogenesis factors, an RNA chaperone and ribosomal proteins associate with the nascent pre-rRNA and work in concert to generate RNA folding, modifications, rearrangements and cleavage as well as targeted degradation of pre-ribosomal RNA by the RNA exosome. The chain is Nucleolar protein 6 from Drosophila virilis (Fruit fly).